Consider the following 87-residue polypeptide: Protein WFDC11 (87 aa).

Positions 1 to 25 are cleaved as a signal peptide; the sequence is MVSLMKLWIPMLMTFFCTVLLSVLG.

It is found in the secreted. The sequence is that of Protein WFDC11 (WFDC11) from Homo sapiens (Human).